Consider the following 351-residue polypeptide: Dihydroorotate dehydrogenase (quinone) (351 aa).

FMN is bound by residues 61-65 (AGLDK) and Thr-85. Lys-65 contacts substrate. A substrate-binding site is contributed by 110–114 (NRMGF). The FMN site is built by Asn-139 and Asn-172. Position 172 (Asn-172) interacts with substrate. Ser-175 (nucleophile) is an active-site residue. Asn-177 contacts substrate. Residues Lys-217 and Thr-245 each coordinate FMN. 246–247 (NT) is a substrate binding site. FMN-binding positions include Gly-268, Gly-297, and 318 to 319 (YS).

The protein belongs to the dihydroorotate dehydrogenase family. Type 2 subfamily. Monomer. Requires FMN as cofactor.

The protein resides in the cell membrane. It catalyses the reaction (S)-dihydroorotate + a quinone = orotate + a quinol. It functions in the pathway pyrimidine metabolism; UMP biosynthesis via de novo pathway; orotate from (S)-dihydroorotate (quinone route): step 1/1. Catalyzes the conversion of dihydroorotate to orotate with quinone as electron acceptor. In Xanthomonas oryzae pv. oryzae (strain MAFF 311018), this protein is Dihydroorotate dehydrogenase (quinone).